A 228-amino-acid chain; its full sequence is MTKWNYGVFFLNFYHVGQQEPSLTMSNALETLRIIDEDTSIYDVVAFSEHHIDKSYNDETKLAPFVSLGKQIHILATSPETVVKAAKYGMPLLFKWDDSQQKRIELLNHYQAAAAKFNVDIAGVRHRLMLFVNVNDNPTQAKAELSIYLEDYLSYTQAETSIDEIINSNAAGNFDTCLHHVAEMAQGLNNKVDFLFCFESMKDQENKKSLMINFDKRVINYRKEHNLN.

It belongs to the bacterial luciferase oxidoreductase family. In terms of assembly, homodimer. Requires FMN as cofactor.

The protein is Non-fluorescent flavoprotein (luxF) of Photobacterium leiognathi.